Consider the following 234-residue polypeptide: Inner membrane protein YbhL (234 aa).

Topologically, residues 1–23 are periplasmic; that stretch reads MDRFPRSDSIVQPRAGLQTYMAQ. Residues 24–44 form a helical membrane-spanning segment; the sequence is VYGWMTVGLLLTAFVAWYAAN. The Cytoplasmic portion of the chain corresponds to 45-56; sequence SAAVMELLFTNR. The helical transmembrane segment at 57 to 77 threads the bilayer; that stretch reads VFLIGLIIAQLALVIVLSAMI. Residues 78–79 lie on the Periplasmic side of the membrane; sequence QK. A helical transmembrane segment spans residues 80–100; sequence LSAGVTTMLFMLYSALTGLTL. Residues 101–102 lie on the Cytoplasmic side of the membrane; it reads SS. Residues 103–123 form a helical membrane-spanning segment; that stretch reads IFIVYTAASIASTFVVTAGMF. Over 124 to 136 the chain is Periplasmic; that stretch reads GAMSLYGYTTKRD. A helical transmembrane segment spans residues 137–157; the sequence is LSGFGNMLFMALIGIVLASLV. Residues 158 to 163 lie on the Cytoplasmic side of the membrane; sequence NFWLKS. Residues 164-184 form a helical membrane-spanning segment; it reads EALMWAVTYIGVIVFVGLTAY. Over 185 to 206 the chain is Periplasmic; that stretch reads DTQKLKNMGEQIDTRDTSNLRK. The chain crosses the membrane as a helical span at residues 207–227; that stretch reads YSILGALTLYLDFINLFLMLL. Residues 228–234 are Cytoplasmic-facing; it reads RIFGNRR.

This sequence belongs to the BI1 family.

The protein resides in the cell inner membrane. This is Inner membrane protein YbhL (ybhL) from Escherichia coli (strain K12).